The primary structure comprises 177 residues: Large ribosomal subunit protein uL5 (177 aa).

The protein belongs to the universal ribosomal protein uL5 family. In terms of assembly, part of the 50S ribosomal subunit; part of the 5S rRNA/L5/L18/L25 subcomplex. Contacts the 5S rRNA and the P site tRNA. Forms a bridge to the 30S subunit in the 70S ribosome.

This is one of the proteins that bind and probably mediate the attachment of the 5S RNA into the large ribosomal subunit, where it forms part of the central protuberance. In the 70S ribosome it contacts protein S13 of the 30S subunit (bridge B1b), connecting the 2 subunits; this bridge is implicated in subunit movement. Contacts the P site tRNA; the 5S rRNA and some of its associated proteins might help stabilize positioning of ribosome-bound tRNAs. In Wolbachia pipientis wMel, this protein is Large ribosomal subunit protein uL5.